Reading from the N-terminus, the 329-residue chain is 2-oxoglutarate-dependent dioxygenase mpl2 (329 aa).

Residues 183–288 (PACPLRLLHY…RYSVVFFFDG (106 aa)) enclose the Fe2OG dioxygenase domain. Residues histidine 211, aspartate 213, and histidine 269 each contribute to the Fe cation site. Arginine 279 is a binding site for 2-oxoglutarate.

It belongs to the iron/ascorbate-dependent oxidoreductase family. It depends on Fe(2+) as a cofactor.

It functions in the pathway mycotoxin biosynthesis. 2-oxoglutarate-dependent dioxygenase; part of the gene cluster that mediates the biosynthesis of the mycotoxin citrinin, a hepato-nephrotoxic compound to humans due to inhibition of respiration complex III. The pathway begins with the synthesis of a keto-aldehyde intermediate by the citrinin PKS (pksCT) from successive condensations of 4 malonyl-CoA units, presumably with a simple acetyl-CoA starter unit. Release of the keto-aldehyde intermediate is consistent with the presence of the C-terminal reductive release domain. Mp11 collaborates with pksCT by catalyzing the hydrolysis of ACP-bound acyl intermediates to free the ACP from stalled intermediates. Mpl2 then catalyzes the oxidation of the C-12 methyl of the ketone intermediate to an alcohol intermediate which is further oxidized by the oxidoreductase mpl7 to produce a bisaldehyde intermediate. The fourth catalytic step is catalyzed by the mpl4 aldehyde dehydrogenase. The final transformation is the reduction of C-3 by mpl6 to provide the chemically stable citrinin nucleus. The protein is 2-oxoglutarate-dependent dioxygenase mpl2 of Monascus purpureus (Red mold).